The sequence spans 344 residues: MVKVGIFGATGYTGVELIRILSKHEKVEIKYLSSQSYNTIAISNVYSSLLGFCDKVLEEVDFERAMSECDVIFTALPSGHAAKIAREAVKKGIKVIDLGADFRFDDYSIYKEWYSGEYDGYDGIKRVYGLPEIYRDDIKEAQVVGNPGCYPTSVILGLMPLLKNGIIEGKIIVDSKSGVSGAGRSPSQNNMYAECNENIKAYNVAKHRHIPEMEQELSKIFGETVSVVFTPHLAPMTRGILSTMYCKLKKDIDVDTVYDIYADFYKKEYFIKVLEPGHYPATKSVYGSNFCHIGFEVDKRTNTLIVMSAIDNLVKGASGQAVQNMNIMFGIDENTGLDIVPIYP.

The active site involves Cys-149.

This sequence belongs to the NAGSA dehydrogenase family. Type 1 subfamily.

The protein resides in the cytoplasm. The enzyme catalyses N-acetyl-L-glutamate 5-semialdehyde + phosphate + NADP(+) = N-acetyl-L-glutamyl 5-phosphate + NADPH + H(+). It participates in amino-acid biosynthesis; L-arginine biosynthesis; N(2)-acetyl-L-ornithine from L-glutamate: step 3/4. Its function is as follows. Catalyzes the NADPH-dependent reduction of N-acetyl-5-glutamyl phosphate to yield N-acetyl-L-glutamate 5-semialdehyde. The chain is N-acetyl-gamma-glutamyl-phosphate reductase from Thermoanaerobacter sp. (strain X514).